The sequence spans 113 residues: MSMQFGSSTEFSNMCGVTLMNTPIGRVVAEVMGAKDGVELTEYPSMIRVDGQRLLDFDYEELTDALGQEFDGSIFEEISSTHYGRMVHLDEKTLLFASPEDAAEYIGFDLTAQ.

The protein belongs to the TmoD/XamoD family. As to quaternary structure, the propane 2-monooxygenase multicomponent enzyme system is composed of an electron transfer component and a monooxygenase component interacting with the effector protein PrmD. The electron transfer component is composed of a reductase (PrmB), and the monooxygenase component is formed by a large subunit (PrmA) and a small subunit (PrmC).

Its function is as follows. Effector component of the propane 2-monooxygenase multicomponent enzyme system which is involved in the degradation of propane via the O2-dependent hydroxylation of propane. This is Propane 2-monooxygenase, effector component from Rhodococcus jostii (strain RHA1).